The chain runs to 308 residues: Glutaminase (308 aa).

Substrate-binding residues include Ser66, Asn117, Glu161, Asn168, Tyr192, Tyr244, and Val262.

Belongs to the glutaminase family. In terms of assembly, homotetramer.

The catalysed reaction is L-glutamine + H2O = L-glutamate + NH4(+). The protein is Glutaminase of Salmonella arizonae (strain ATCC BAA-731 / CDC346-86 / RSK2980).